Consider the following 287-residue polypeptide: MSEIGLVKIYSGKVRDLYEIDDKRMLMVASDRLSAFDVILDDPIPSKGEILTQISNFWFKKLAHIMPNHFTGQTVYDVLPENEAKVLEKRAVVAKKLTPVKVEAIVRGYLAGSGWKDYQKTGSVCGIRLPEGMQEAQQLPEVIFTPSTKAAVGDHDENISFEECGRIIGKELAEEVRAKAVRLYTEAAEYAKSRGIIICDTKFEFGLDTNGTLTLMDEVLTPDSSRFWPADQYEVGTNPPSFDKQFVRDWLEQSGWNKKAPAPKVPADVIQKTVEKYREALTLLTQD.

It belongs to the SAICAR synthetase family.

The enzyme catalyses 5-amino-1-(5-phospho-D-ribosyl)imidazole-4-carboxylate + L-aspartate + ATP = (2S)-2-[5-amino-1-(5-phospho-beta-D-ribosyl)imidazole-4-carboxamido]succinate + ADP + phosphate + 2 H(+). Its pathway is purine metabolism; IMP biosynthesis via de novo pathway; 5-amino-1-(5-phospho-D-ribosyl)imidazole-4-carboxamide from 5-amino-1-(5-phospho-D-ribosyl)imidazole-4-carboxylate: step 1/2. The sequence is that of Phosphoribosylaminoimidazole-succinocarboxamide synthase from Neisseria meningitidis serogroup A / serotype 4A (strain DSM 15465 / Z2491).